The chain runs to 828 residues: Glycerol-3-phosphate acyltransferase (828 aa).

Residues 309–314 (CHRSHI) carry the HXXXXD motif motif.

It belongs to the GPAT/DAPAT family.

It localises to the cell inner membrane. It catalyses the reaction sn-glycerol 3-phosphate + an acyl-CoA = a 1-acyl-sn-glycero-3-phosphate + CoA. Its pathway is phospholipid metabolism; CDP-diacylglycerol biosynthesis; CDP-diacylglycerol from sn-glycerol 3-phosphate: step 1/3. The protein is Glycerol-3-phosphate acyltransferase of Pseudomonas entomophila (strain L48).